Consider the following 805-residue polypeptide: Angiotensin-converting enzyme 2 (805 aa).

A signal peptide spans 1–17 (MSSSSWLLLSLVAVTAA). At 18–740 (QSTIEEQAKT…LGPPNQPPVS (723 aa)) the chain is on the extracellular side. The 589-residue stretch at 19 to 607 (STIEEQAKTF…QNKNSFVGWS (589 aa)) folds into the Peptidase M2 domain. Residues 30–41 (DKFNHEAEDLFY) are interaction with SARS-CoV spike glycoprotein. Residue Asn-53 is glycosylated (N-linked (GlcNAc...) asparagine). The interval 82–84 (MYP) is interaction with SARS-CoV spike glycoprotein. 2 N-linked (GlcNAc...) asparagine glycosylation sites follow: Asn-90 and Asn-103. Cys-133 and Cys-141 form a disulfide bridge. Arg-169 provides a ligand contact to chloride. Arg-273 is a binding site for substrate. N-linked (GlcNAc...) asparagine glycosylation is present at Asn-322. Cys-344 and Cys-361 are disulfide-bonded. 345–346 (HP) provides a ligand contact to substrate. An interaction with SARS-CoV spike glycoprotein region spans residues 353–357 (KGDFR). His-374 provides a ligand contact to Zn(2+). The Proton acceptor role is filled by Glu-375. Zn(2+)-binding residues include His-378 and Glu-402. Asn-432 carries N-linked (GlcNAc...) asparagine glycosylation. Chloride is bound by residues Trp-477 and Lys-481. His-505 functions as the Proton donor in the catalytic mechanism. Tyr-515 provides a ligand contact to substrate. Cys-530 and Cys-542 are oxidised to a cystine. An N-linked (GlcNAc...) asparagine glycan is attached at Asn-546. The region spanning 614–805 (ADQSIKVRIS…QNTDDVQTSF (192 aa)) is the Collectrin-like domain. The segment at 652–659 (RQYFLKVK) is essential for cleavage by ADAM17. Residue Asn-690 is glycosylated (N-linked (GlcNAc...) asparagine). The segment at 697-716 (RTEVEKAIRMSRSRINDAFR) is essential for cleavage by TMPRSS11D and TMPRSS2. The chain crosses the membrane as a helical span at residues 741 to 761 (IWLIVFGVVMGVIVVGIVILI). Over 762–805 (FTGIRDRKKKNKARSGENPYASIDISKGENNPGFQNTDDVQTSF) the chain is Cytoplasmic. Positions 772–805 (NKARSGENPYASIDISKGENNPGFQNTDDVQTSF) are disordered. An LIR motif is present at residues 778-786 (ENPYASIDI). Tyr-781 bears the Phosphotyrosine mark. The Endocytic sorting signal signature appears at 781 to 784 (YASI). The short motif at 781–785 (YASID) is the SH2-binding element. A Phosphoserine modification is found at Ser-783. Lys-788 participates in a covalent cross-link: Glycyl lysine isopeptide (Lys-Gly) (interchain with G-Cter in ubiquitin). Positions 789-805 (GENNPGFQNTDDVQTSF) are enriched in polar residues. The PTB signature appears at 792–795 (NPGF). Positions 803 to 805 (TSF) match the PDZ-binding motif.

Belongs to the peptidase M2 family. In terms of assembly, homodimer. Interacts with the catalytically active form of TMPRSS2. Interacts with SLC6A19; this interaction is essential for expression and function of SLC6A19 in intestine. Interacts with ITGA5:ITGB1. Probably interacts (via endocytic sorting signal motif) with AP2M1; the interaction is inhibited by phosphorylation of Tyr-781. Interacts (via PDZ-binding motif) with NHERF1 (via PDZ domains); the interaction may enhance ACE2 membrane residence. (Microbial infection) Interacts with SARS coronavirus/SARS-CoV spike protein. As to quaternary structure, (Microbial infection) Interacts with SARS coronavirus-2/SARS-CoV-2 spike protein (via RBD domain). In terms of assembly, (Microbial infection) Interacts with human coronavirus NL63 spike protein. (Microbial infection) Interacts with human coronavirus NL63/HCoV-NL63 spike glycoprotein. As to quaternary structure, (Microbial infection) Interacts with SARS coronavirus-2/SARS-CoV-2 spike protein; the interaction is increased by AVP/Arg-vasopressin with which they may form a complex. Zn(2+) is required as a cofactor. The cofactor is chloride. N-glycosylation on Asn-90 may limit SARS infectivity. Post-translationally, proteolytic cleavage by ADAM17 generates a secreted form. Also cleaved by serine proteases: TMPRSS2, TMPRSS11D and HPN/TMPRSS1. In terms of processing, phosphorylated. Phosphorylation at Tyr-781 probably inhibits interaction with AP2M1 and enables interactions with proteins containing SH2 domains. Ubiquitinated. Ubiquitinated on Lys-788 via 'Lys-48'-linked ubiquitin. 'Lys-48'-linked deubiquitinated by USP50 on the Lys-788; leading to its stabilization. As to expression, expressed in endothelial cells from small and large arteries, and in arterial smooth muscle cells (at protein level). Expressed in enterocytes of the small intestine, Leydig cells and Sertoli cells (at protein level). Expressed in the renal proximal tubule and the small intestine (at protein level). Expressed in heart, kidney, testis, and gastrointestinal system (at protein level). In lung, expressed at low levels in some alveolar type 2 cells, the expression seems to be individual-specific (at protein level). Expressed in nasal epithelial cells (at protein level). Coexpressed with TMPRSS2 within some lung alveolar type 2 cells, ileal absorptive enterocytes, intestinal epithelial cells, cornea, gallbladder and nasal goblet secretory cells. Coexpressed with TMPRSS4 within mature enterocytes. Expressed in nasal and bronchial epithelial cells (at protein level).

It is found in the secreted. The protein localises to the cell membrane. Its subcellular location is the cytoplasm. It localises to the cell projection. The protein resides in the cilium. It is found in the apical cell membrane. The catalysed reaction is angiotensin II + H2O = angiotensin-(1-7) + L-phenylalanine. It carries out the reaction angiotensin I + H2O = angiotensin-(1-9) + L-leucine. It catalyses the reaction bradykinin(1-8) + H2O = bradykinin(1-7) + L-phenylalanine. The enzyme catalyses neurotensin + H2O = neurotensin-(1-12) + L-leucine. The catalysed reaction is neurotensin-(1-8) + H2O = neurotensin-(1-7) + L-arginine. It carries out the reaction kinetensin + H2O = kinetensin-(1-8) + L-leucine. It catalyses the reaction dynorphin A-(1-13) + H2O = dynorphin A-(1-12) + L-lysine. The enzyme catalyses apelin-13 + H2O = apelin-12 + L-phenylalanine. The catalysed reaction is [Pyr1]apelin-13 + H2O = [Pyr1]apelin-12 + L-phenylalanine. It carries out the reaction apelin-17 + H2O = apelin-16 + L-phenylalanine. It catalyses the reaction beta-casomorphin-7 + H2O = beta-casomorphin-6 + L-isoleucine. The enzyme catalyses neocasomorphin + H2O = neocasomorphin-(1-5) + L-isoleucine. Regulated by chloride and fluoride, but not bromide. Chloride increases angiotensin I and decreases angiotensin II cleavage. Inhibited by MLN-4760, cFP_Leu, and EDTA, but not by the ACE inhibitors lisinopril, captopril and enalaprilat. Highly potent and selective in vitro ACE2 inhibitors were identified. In terms of biological role, essential counter-regulatory carboxypeptidase of the renin-angiotensin hormone system that is a critical regulator of blood volume, systemic vascular resistance, and thus cardiovascular homeostasis. Converts angiotensin I to angiotensin 1-9, a nine-amino acid peptide with anti-hypertrophic effects in cardiomyocytes, and angiotensin II to angiotensin 1-7, which then acts as a beneficial vasodilator and anti-proliferation agent, counterbalancing the actions of the vasoconstrictor angiotensin II. Also removes the C-terminal residue from three other vasoactive peptides, neurotensin, kinetensin, and des-Arg bradykinin, but is not active on bradykinin. Also cleaves other biological peptides, such as apelins (apelin-13, [Pyr1]apelin-13, apelin-17, apelin-36), casomorphins (beta-casomorphin-7, neocasomorphin) and dynorphin A with high efficiency. In addition, ACE2 C-terminus is homologous to collectrin and is responsible for the trafficking of the neutral amino acid transporter SL6A19 to the plasma membrane of gut epithelial cells via direct interaction, regulating its expression on the cell surface and its catalytic activity. Its function is as follows. (Microbial infection) Acts as a receptor for human coronaviruses SARS-CoV and SARS-CoV-2, as well as human coronavirus NL63/HCoV-NL63. Non-functional as a carboxypeptidase. Functionally, (Microbial infection) Non-functional as a receptor for human coronavirus SARS-CoV-2. This Homo sapiens (Human) protein is Angiotensin-converting enzyme 2.